A 109-amino-acid polypeptide reads, in one-letter code: Movement protein (109 aa).

The disordered stretch occupies residues 1–28; the sequence is MDSFGRAPPLWPQSALPRVPGAAPSSSG. A helical transmembrane segment spans residues 34 to 54; it reads VGEIAIFTFVAVLALYLLWSW.

Belongs to the mastrevirus movement protein family. In terms of assembly, interacts with the capsid protein (CP). Part of a MP-CP-viral DNA complex.

The protein resides in the host membrane. In terms of biological role, involved in the viral transport within, and between cells. The chain is Movement protein from Sugarcane streak virus (isolate South Africa) (SSV).